The primary structure comprises 794 residues: DNA mismatch repair protein pms1 (794 aa).

Disordered regions lie at residues 351 to 384 (SQIP…SFSY) and 409 to 442 (GASL…TASS). Residues 352 to 371 (QIPDSSGDSTDQELPQSIPA) show a composition bias toward polar residues. Residues 419–429 (LPERLQKDSMR) are compositionally biased toward basic and acidic residues. The span at 430 to 442 (RSSPLNEKVTASS) shows a compositional bias: polar residues.

It belongs to the DNA mismatch repair MutL/HexB family.

In terms of biological role, this protein is involved in the repair of mismatches in DNA. The sequence is that of DNA mismatch repair protein pms1 (pms1) from Schizosaccharomyces pombe (strain 972 / ATCC 24843) (Fission yeast).